Reading from the N-terminus, the 115-residue chain is Large ribosomal subunit protein bL20c (115 aa).

It belongs to the bacterial ribosomal protein bL20 family.

Its subcellular location is the plastid. It localises to the chloroplast. Its function is as follows. Binds directly to 23S ribosomal RNA and is necessary for the in vitro assembly process of the 50S ribosomal subunit. It is not involved in the protein synthesizing functions of that subunit. The sequence is that of Large ribosomal subunit protein bL20c (rpl20) from Cyanidium caldarium (Red alga).